A 255-amino-acid chain; its full sequence is Small ribosomal subunit protein uS2 (255 aa).

The interval 230–255 (QSSSGRDLGASSEVPVEPALEEAAEG) is disordered.

This sequence belongs to the universal ribosomal protein uS2 family.

In Rhizobium leguminosarum bv. trifolii (strain WSM2304), this protein is Small ribosomal subunit protein uS2.